A 315-amino-acid polypeptide reads, in one-letter code: Homoserine kinase (315 aa).

97–107 (PPARGLGSSAT) is an ATP binding site.

Belongs to the GHMP kinase family. Homoserine kinase subfamily.

Its subcellular location is the cytoplasm. It catalyses the reaction L-homoserine + ATP = O-phospho-L-homoserine + ADP + H(+). Its pathway is amino-acid biosynthesis; L-threonine biosynthesis; L-threonine from L-aspartate: step 4/5. Functionally, catalyzes the ATP-dependent phosphorylation of L-homoserine to L-homoserine phosphate. The protein is Homoserine kinase of Synechococcus sp. (strain CC9311).